Consider the following 1410-residue polypeptide: Endoribonuclease Dicer homolog 2a (1410 aa).

Residues 1–15 (MGGPLTAAGGRGDGG) are compositionally biased toward gly residues. The segment at 1–30 (MGGPLTAAGGRGDGGAKAVEPLRPPPPPDP) is disordered. The 182-residue stretch at 41 to 222 (ALERAVRGNT…HNYSKQISEI (182 aa)) folds into the Helicase ATP-binding domain. 54–61 (LETGSGKT) provides a ligand contact to ATP. Positions 163–166 (DECH) match the DECH box motif. The 174-residue stretch at 388–561 (TLLQYRHMQD…DTYYRVESTR (174 aa)) folds into the Helicase C-terminal domain. The Dicer dsRNA-binding fold domain maps to 569 to 655 (SVPLIHFFCS…LPELDVPCDE (87 aa)). In terms of domain architecture, PAZ spans 827–942 (KDIDLLQTKD…LPPELCRIIM (116 aa)). 2 consecutive RNase III domains span residues 969-1124 (SVKL…STAG) and 1161-1308 (VRSL…LDSK). 3 residues coordinate Mg(2+): Glu-1200, Asp-1294, and Glu-1297. The DRBM domain occupies 1334–1400 (DPVKGLQEFC…SKAVLKDLIA (67 aa)).

It belongs to the helicase family. Dicer subfamily. As to quaternary structure, may interact with ARGONAUTE1 or PINHEAD through their common PAZ domains. Requires Mg(2+) as cofactor. The cofactor is Mn(2+).

The protein localises to the nucleus. Its function is as follows. Probably involved in the RNA silencing pathway. May cleave double-stranded RNA to produce short 21-24 nucleotides (nt) RNAs which target the selective destruction of complementary RNAs. The protein is Endoribonuclease Dicer homolog 2a (DCL2A) of Oryza sativa subsp. japonica (Rice).